A 336-amino-acid polypeptide reads, in one-letter code: Biotin synthase (336 aa).

Positions 51–270 constitute a Radical SAM core domain; sequence NQVQCNQLLN…IALARIMMPK (220 aa). 3 residues coordinate [4Fe-4S] cluster: Cys-66, Cys-70, and Cys-73. 4 residues coordinate [2Fe-2S] cluster: Cys-110, Cys-141, Cys-201, and Arg-274.

This sequence belongs to the radical SAM superfamily. Biotin synthase family. As to quaternary structure, homodimer. [4Fe-4S] cluster is required as a cofactor. [2Fe-2S] cluster serves as cofactor.

The catalysed reaction is (4R,5S)-dethiobiotin + (sulfur carrier)-SH + 2 reduced [2Fe-2S]-[ferredoxin] + 2 S-adenosyl-L-methionine = (sulfur carrier)-H + biotin + 2 5'-deoxyadenosine + 2 L-methionine + 2 oxidized [2Fe-2S]-[ferredoxin]. It functions in the pathway cofactor biosynthesis; biotin biosynthesis; biotin from 7,8-diaminononanoate: step 2/2. Catalyzes the conversion of dethiobiotin (DTB) to biotin by the insertion of a sulfur atom into dethiobiotin via a radical-based mechanism. The sequence is that of Biotin synthase from Rhodopseudomonas palustris (strain ATCC BAA-98 / CGA009).